Here is a 659-residue protein sequence, read N- to C-terminus: QWRF motif-containing protein 2 (659 aa).

Disordered regions lie at residues 1-125 (MVAA…SVTV), 157-221 (SKKK…LDCG), 291-317 (DTDSVSSGSTNGVQECGSGVNGEISKS), 340-359 (RLQDPGSPLSSSPGLKTSSI), and 371-429 (SDAV…NAYN). Positions 42 to 72 (SPSPSHSVSSTTTTTTTTTTTTSSSSSSSSS) are enriched in low complexity. Residues 90–102 (RSTTNSASNSIKT) show a composition bias toward polar residues. Over residues 172–190 (STPERRRSTPVRDQRENSK) the composition is skewed to basic and acidic residues. Polar residues-rich tracts occupy residues 206-216 (SESVVPNSLSR) and 291-303 (DTDSVSSGSTNGV). 2 stretches are compositionally biased toward low complexity: residues 345–359 (GSPLSSSPGLKTSSI) and 401–418 (ATTTSSPARALSSPSRAR). The QWRF motif motif lies at 468 to 471 (QWRF).

It belongs to the QWRF family.

This chain is QWRF motif-containing protein 2 (QWRF2), found in Arabidopsis thaliana (Mouse-ear cress).